We begin with the raw amino-acid sequence, 335 residues long: GTPase Obg (335 aa).

The 159-residue stretch at 1–159 (MKFVDSASIR…REIGLELSIM (159 aa)) folds into the Obg domain. Residues 160-332 (ADIGLLGMPN…LVAGLFKLVK (173 aa)) form the OBG-type G domain. Residues 166–173 (GMPNAGKS), 191–195 (FTTLH), 212–215 (DIPG), 282–285 (NKMD), and 313–315 (SAL) contribute to the GTP site. Positions 173 and 193 each coordinate Mg(2+).

The protein belongs to the TRAFAC class OBG-HflX-like GTPase superfamily. OBG GTPase family. As to quaternary structure, monomer. Mg(2+) serves as cofactor.

The protein localises to the cytoplasm. Its function is as follows. An essential GTPase which binds GTP, GDP and possibly (p)ppGpp with moderate affinity, with high nucleotide exchange rates and a fairly low GTP hydrolysis rate. Plays a role in control of the cell cycle, stress response, ribosome biogenesis and in those bacteria that undergo differentiation, in morphogenesis control. This chain is GTPase Obg, found in Ruthia magnifica subsp. Calyptogena magnifica.